A 195-amino-acid chain; its full sequence is Phosphoheptose isomerase (195 aa).

The 161-residue stretch at 35–195 (IVSKILQAGN…IVEYNLFKME (161 aa)) folds into the SIS domain. 51–53 (NGG) contributes to the substrate binding site. Zn(2+)-binding residues include H60 and E64. Residues E64, 95-96 (ND), 121-123 (STS), S126, and Q173 each bind substrate. Zn(2+) contacts are provided by Q173 and H181.

The protein belongs to the SIS family. GmhA subfamily. The cofactor is Zn(2+).

It is found in the cytoplasm. The catalysed reaction is 2 D-sedoheptulose 7-phosphate = D-glycero-alpha-D-manno-heptose 7-phosphate + D-glycero-beta-D-manno-heptose 7-phosphate. The protein operates within carbohydrate biosynthesis; D-glycero-D-manno-heptose 7-phosphate biosynthesis; D-glycero-alpha-D-manno-heptose 7-phosphate and D-glycero-beta-D-manno-heptose 7-phosphate from sedoheptulose 7-phosphate: step 1/1. Its function is as follows. Catalyzes the isomerization of sedoheptulose 7-phosphate in D-glycero-D-manno-heptose 7-phosphate. The protein is Phosphoheptose isomerase of Leptospira interrogans serogroup Icterohaemorrhagiae serovar copenhageni (strain Fiocruz L1-130).